The following is a 109-amino-acid chain: ATPase inhibitor mai-2, mitochondrial (109 aa).

2 disordered regions span residues 18–39 (FSAG…SIRD) and 73–109 (EEVK…LGKE). Residues 21–35 (GGHGDGAGRGGGSGG) are compositionally biased toward gly residues. The stretch at 55–109 (YFYKKQKAQLQELREHIQEEVKHHEGQLENHKKVLERHQQRISEIEAQERALGKE) forms a coiled coil.

It belongs to the ATPase inhibitor family.

It is found in the mitochondrion. In terms of biological role, thought to be a regulatory component of the ATP-synthesizing complex in the mitochondria. Activity is pH dependent. This chain is ATPase inhibitor mai-2, mitochondrial (mai-2), found in Caenorhabditis elegans.